Consider the following 36-residue polypeptide: Probable non-specific lipid-transfer protein (36 aa).

Belongs to the plant LTP family. Post-translationally, phosphorylated by Ca(2+)-dependent protein kinase.

Its function is as follows. Plant non-specific lipid-transfer proteins transfer phospholipids as well as galactolipids across membranes. May play a role in wax or cutin deposition in the cell walls of expanding epidermal cells and certain secretory tissues. This is Probable non-specific lipid-transfer protein from Pinus pinea (Italian stone pine).